A 74-amino-acid polypeptide reads, in one-letter code: Large ribosomal subunit protein uL30 (74 aa).

Belongs to the universal ribosomal protein uL30 family. As to quaternary structure, part of the 50S ribosomal subunit.

This is Large ribosomal subunit protein uL30 from Micrococcus luteus (strain ATCC 4698 / DSM 20030 / JCM 1464 / CCM 169 / CCUG 5858 / IAM 1056 / NBRC 3333 / NCIMB 9278 / NCTC 2665 / VKM Ac-2230) (Micrococcus lysodeikticus).